Reading from the N-terminus, the 565-residue chain is MKMRPRYSVIASAVSLGFVLSKSVMALGQPDTGSLNRELEQRQIQSEAKPSGELFNQTANSPYTAQYKQGLKFPLTQVQILDRNNQEVVTDELAHILKNYVGKEVSLSDLSNLANEISEFYRHNNYLVAKAILPPQEIEQGTVKILLLKGNVGEIRLQNHSALSNKFVSRLSNTTVNTSEFILKDELEKFALTINDVPGVNAGLQLSAGKKVGEANLLIKINDAKRFSSYVSVDNQGNKYTGRYRLAAGTKVSNLNGWGDELKLDLMSSNQANLKNARIDYSSLIDGYSTRFGVTANYLDYKLGGNFKSLQSQGHSHTLGAYLLHPTIRTPNFRLSTKVSFNHQNLTDKQQAVYVKQKRKINSLTAGIDGSWNLIKDGTTYFSLSTLFGNLANQTSEKKHNAVENFQPKSHFTVYNYRLSHEQILPKSFAFNIGINGQFADKTLESSQKMLLGGLSGVRGHQAGAASVDEGHLIQTEFKHYLPVFSQSVLVSSLFYDYGLGKYYKNSQFLEQGVKNSVKLQSVGAGLSLSDAGSYAINVSVAKPLDNNINNADKHQFWLSMIKTF.

A signal peptide spans 1-26 (MKMRPRYSVIASAVSLGFVLSKSVMA). The POTRA domain maps to 73-150 (FPLTQVQILD…GTVKILLLKG (78 aa)).

It belongs to the TPS (TC 1.B.20) family.

The protein localises to the cell outer membrane. In terms of biological role, likely functions in the release of soluble HxuA from the cell. Functionally, probable member of a two partner secretion pathway (TPS) in which it mediates the secretion of HuxA. In Haemophilus influenzae, this protein is Heme/hemopexin transporter protein HuxB (hxuB).